Consider the following 317-residue polypeptide: GTPase Era (317 aa).

Residues 17 to 190 enclose the Era-type G domain; the sequence is RAGFACFVGR…ADLLTPLLPE (174 aa). The segment at 25–32 is G1; the sequence is GRPNAGKS. 25–32 provides a ligand contact to GTP; sequence GRPNAGKS. The tract at residues 51–55 is G2; the sequence is QTTRH. The interval 72 to 75 is G3; the sequence is DTPG. GTP contacts are provided by residues 72–76 and 135–138; these read DTPGL and TKTD. The segment at 135–138 is G4; sequence TKTD. Positions 169–171 are G5; sequence VSA. The 83-residue stretch at 221–303 folds into the KH type-2 domain; the sequence is VRDELPHSIA…FLDLHVKVAK (83 aa).

It belongs to the TRAFAC class TrmE-Era-EngA-EngB-Septin-like GTPase superfamily. Era GTPase family. In terms of assembly, monomer.

The protein localises to the cytoplasm. It localises to the cell membrane. In terms of biological role, an essential GTPase that binds both GDP and GTP, with rapid nucleotide exchange. Plays a role in 16S rRNA processing and 30S ribosomal subunit biogenesis and possibly also in cell cycle regulation and energy metabolism. This chain is GTPase Era, found in Streptomyces coelicolor (strain ATCC BAA-471 / A3(2) / M145).